A 112-amino-acid polypeptide reads, in one-letter code: MVAEKKAKKSHEGINSRLALVMKSGKYTLGYKSVLKSLRSSKGKLILISSNCPPLRRSEIEYYAMLAKVGVHRYNGNNVDLGTACGKYFRVSCLSIVDPGDSDIIKTLPGDQ.

It belongs to the eukaryotic ribosomal protein eL30 family.

The chain is Large ribosomal subunit protein eL30x (RPL30C) from Arabidopsis thaliana (Mouse-ear cress).